The primary structure comprises 178 residues: MAELTTLARPYAKAAFEYAQAHQQLADWSAALGVLAAVSQDDTVRQLLKEPQLTSSAKAQSLIDVCGDKLNAPAQNFVRTVAENKRLELLPTIAEMYEQLKAEQEKSVEVEVTSAFTLSKEQQDKLAKALSARLSREVRLHASEDASLIGGVIIRAGDLVIDGSVRGKLAKLAEALKS.

The protein belongs to the ATPase delta chain family. In terms of assembly, F-type ATPases have 2 components, F(1) - the catalytic core - and F(0) - the membrane proton channel. F(1) has five subunits: alpha(3), beta(3), gamma(1), delta(1), epsilon(1). F(0) has three main subunits: a(1), b(2) and c(10-14). The alpha and beta chains form an alternating ring which encloses part of the gamma chain. F(1) is attached to F(0) by a central stalk formed by the gamma and epsilon chains, while a peripheral stalk is formed by the delta and b chains.

It localises to the cell inner membrane. In terms of biological role, f(1)F(0) ATP synthase produces ATP from ADP in the presence of a proton or sodium gradient. F-type ATPases consist of two structural domains, F(1) containing the extramembraneous catalytic core and F(0) containing the membrane proton channel, linked together by a central stalk and a peripheral stalk. During catalysis, ATP synthesis in the catalytic domain of F(1) is coupled via a rotary mechanism of the central stalk subunits to proton translocation. This protein is part of the stalk that links CF(0) to CF(1). It either transmits conformational changes from CF(0) to CF(1) or is implicated in proton conduction. The protein is ATP synthase subunit delta of Pseudomonas aeruginosa (strain UCBPP-PA14).